The chain runs to 236 residues: Small ribosomal subunit protein uS2c (236 aa).

This sequence belongs to the universal ribosomal protein uS2 family.

It is found in the plastid. Its subcellular location is the chloroplast. The polypeptide is Small ribosomal subunit protein uS2c (rps2) (Oenothera parviflora (Small-flowered evening primrose)).